Here is a 197-residue protein sequence, read N- to C-terminus: dITP/XTP pyrophosphatase (197 aa).

Residue 8–13 (TGNPGK) coordinates substrate. 2 residues coordinate Mg(2+): Glu40 and Asp69. Asp69 acts as the Proton acceptor in catalysis. Residues Ser70, 154-157 (FGYD), Lys177, and 182-183 (HR) contribute to the substrate site.

Belongs to the HAM1 NTPase family. In terms of assembly, homodimer. It depends on Mg(2+) as a cofactor.

The catalysed reaction is XTP + H2O = XMP + diphosphate + H(+). The enzyme catalyses dITP + H2O = dIMP + diphosphate + H(+). It catalyses the reaction ITP + H2O = IMP + diphosphate + H(+). Pyrophosphatase that catalyzes the hydrolysis of nucleoside triphosphates to their monophosphate derivatives, with a high preference for the non-canonical purine nucleotides XTP (xanthosine triphosphate), dITP (deoxyinosine triphosphate) and ITP. Seems to function as a house-cleaning enzyme that removes non-canonical purine nucleotides from the nucleotide pool, thus preventing their incorporation into DNA/RNA and avoiding chromosomal lesions. The polypeptide is dITP/XTP pyrophosphatase (Photorhabdus laumondii subsp. laumondii (strain DSM 15139 / CIP 105565 / TT01) (Photorhabdus luminescens subsp. laumondii)).